The primary structure comprises 85 residues: U4-theraphotoxin-Hhn1a (85 aa).

The first 22 residues, 1–22 (MKVTLIAILTCATVLVLHTTAA), serve as a signal peptide directing secretion. A propeptide spanning residues 23–48 (EELEAESQLMEVGMPDTELAAVDEER) is cleaved from the precursor. Intrachain disulfides connect Cys-52/Cys-66, Cys-56/Cys-77, and Cys-71/Cys-82.

This sequence belongs to the neurotoxin 12 (Hwtx-2) family. 02 (Hwtx-2) subfamily. In terms of assembly, monomer. In terms of tissue distribution, expressed by the venom gland.

The protein resides in the secreted. Its function is as follows. Neurotoxin active on both insects and mammals. In Cyriopagopus hainanus (Chinese bird spider), this protein is U4-theraphotoxin-Hhn1a.